We begin with the raw amino-acid sequence, 368 residues long: Phosphate acyltransferase (368 aa).

The segment at 334-368 (AAPLGESGRDADGAGQASPSAGQPAEPSAALSSKT) is disordered.

Belongs to the PlsX family. Homodimer. Probably interacts with PlsY.

It localises to the cytoplasm. The enzyme catalyses a fatty acyl-[ACP] + phosphate = an acyl phosphate + holo-[ACP]. It functions in the pathway lipid metabolism; phospholipid metabolism. Catalyzes the reversible formation of acyl-phosphate (acyl-PO(4)) from acyl-[acyl-carrier-protein] (acyl-ACP). This enzyme utilizes acyl-ACP as fatty acyl donor, but not acyl-CoA. This chain is Phosphate acyltransferase, found in Burkholderia thailandensis (strain ATCC 700388 / DSM 13276 / CCUG 48851 / CIP 106301 / E264).